The primary structure comprises 191 residues: Acireductone dioxygenase 2 (191 aa).

Positions 102, 104, 108, and 146 each coordinate Fe(2+). Ni(2+)-binding residues include His102, His104, Glu108, and His146.

Belongs to the acireductone dioxygenase (ARD) family. Monomer. Fe(2+) serves as cofactor. Ni(2+) is required as a cofactor.

It catalyses the reaction 1,2-dihydroxy-5-(methylsulfanyl)pent-1-en-3-one + O2 = 3-(methylsulfanyl)propanoate + CO + formate + 2 H(+). It carries out the reaction 1,2-dihydroxy-5-(methylsulfanyl)pent-1-en-3-one + O2 = 4-methylsulfanyl-2-oxobutanoate + formate + 2 H(+). It participates in amino-acid biosynthesis; L-methionine biosynthesis via salvage pathway; L-methionine from S-methyl-5-thio-alpha-D-ribose 1-phosphate: step 5/6. Catalyzes 2 different reactions between oxygen and the acireductone 1,2-dihydroxy-3-keto-5-methylthiopentene (DHK-MTPene) depending upon the metal bound in the active site. Fe-containing acireductone dioxygenase (Fe-ARD) produces formate and 2-keto-4-methylthiobutyrate (KMTB), the alpha-ketoacid precursor of methionine in the methionine recycle pathway. Ni-containing acireductone dioxygenase (Ni-ARD) produces methylthiopropionate, carbon monoxide and formate, and does not lie on the methionine recycle pathway. This is Acireductone dioxygenase 2 from Nocardia farcinica (strain IFM 10152).